The primary structure comprises 125 residues: Mesotocin-neurophysin MT (125 aa).

The first 19 residues, 1 to 19 (MSYTALAVTFFGWLALSSA), serve as a signal peptide directing secretion. Cysteine 20 and cysteine 25 are joined by a disulfide. Glycine 28 carries the glycine amide modification. Cystine bridges form between cysteine 42–cysteine 86, cysteine 45–cysteine 59, cysteine 53–cysteine 76, cysteine 60–cysteine 66, cysteine 93–cysteine 106, cysteine 100–cysteine 118, and cysteine 107–cysteine 112.

Belongs to the vasopressin/oxytocin family. As to expression, mesotocin is produced by magnocellular preoptic neurons in the hypothalamus in amphibians, reptiles and birds.

The protein localises to the secreted. In terms of biological role, mesotocin is a diuretic hormone. The polypeptide is Mesotocin-neurophysin MT (Bufo japonicus (Japanese common toad)).